Here is a 505-residue protein sequence, read N- to C-terminus: Exoglucanase 1 (505 aa).

An N-terminal signal peptide occupies residues 1 to 17 (MYRKLAVISAFLAAARA). Q18 is modified (pyrrolidone carboxylic acid). The catalytic stretch occupies residues 18–449 (QQVCTQQAET…GSTGGNTGSN (432 aa)). Cystine bridges form between C21-C88, C36-C41, C66-C87, and C77-C83. N-linked (GlcNAc...) asparagine glycosylation is found at N93 and N126. 6 disulfide bridges follow: C151-C410, C185-C223, C189-C222, C243-C269, C251-C256, and C274-C344. E225 functions as the Nucleophile in the catalytic mechanism. E230 serves as the catalytic Proton donor/acceptor. 2 N-linked (GlcNAc...) asparagine glycosylation sites follow: N283 and N397. Disordered stretches follow at residues 399–423 (TAST…VEAQ) and 440–472 (GSTG…ATQT). Residues 409–423 (SCSTSSGVPAQVEAQ) show a composition bias toward polar residues. Positions 447 to 470 (GSNPPGTSTTRAPPSSTGSSPTAT) are enriched in low complexity. Positions 450–468 (PPGTSTTRAPPSSTGSSPT) are linker. The CBM1 domain maps to 469 to 505 (ATQTHYGQCGGTGWTGPTRCASGYTCQVLNPFYSQCL).

Belongs to the glycosyl hydrolase 7 (cellulase C) family. In terms of processing, O-glycosylated. O-glycosylation of the cellulase linker provides protection from proteolysis. Linker glycans also contribute to binding affinity of cellobiohydrolases to cellulose.

The protein resides in the secreted. The catalysed reaction is Hydrolysis of (1-&gt;4)-beta-D-glucosidic linkages in cellulose and cellotetraose, releasing cellobiose from the non-reducing ends of the chains.. In terms of biological role, exocellobiohydrolases (CBH) that catalyzes the hydrolysis of 1,4-beta-D-glucosidic bonds in cellulose to release the disaccharide cellobiose. The degradation of cellulose involves an interplay between different cellulolytic enzymes. Hydrolysis starts with endoglucanases (EGs), which cut internal beta-1,4-glucosidic bonds in cellulose to reduce the polymerization degree of the substrate and create new chain ends for exocellobiohydrolases (CBHs). The CBHs release the disaccharide cellobiose from the non-reducing end of the cellulose polymer chain. Finally, beta-1,4-glucosidases hydrolyze the cellobiose and other short cello-oligosaccharides into glucose units. The protein is Exoglucanase 1 (cbh1) of Trichoderma harzianum (Hypocrea lixii).